Reading from the N-terminus, the 170-residue chain is Co-chaperone protein HscB homolog (170 aa).

Residues 5-79 (DHFSLFGLPA…RARYLCEQAG (75 aa)) form the J domain.

Belongs to the HscB family. As to quaternary structure, interacts with HscA and stimulates its ATPase activity.

Its function is as follows. Co-chaperone involved in the maturation of iron-sulfur cluster-containing proteins. Seems to help targeting proteins to be folded toward HscA. The protein is Co-chaperone protein HscB homolog of Bordetella parapertussis (strain 12822 / ATCC BAA-587 / NCTC 13253).